Here is a 1307-residue protein sequence, read N- to C-terminus: MYRYNRSSPFERTPEKRVSRQESQRKSIELPKLPPLNTRNSFLDDSDNGTDNISIGWTPISDTQQFQSPVPQAFTFTSKHSARGNGTSSSESTPKSTKYVKERRPPPPPPLLYSTESIRIDSPMVSPSSQSRERSPNKLSFIGNSEERHHMEYISNHSRILKSPFANGFSPNSPKSPRDSSKQQAHFSDESDLRCHEREKALPPIPFTTTLLLSPFDDEDSEFFTKPPPPLSTSRNVSGNSRVSEALESVYSDSDYTFNNSNARQSSFNSLLGAKPLELAPSITAPTQPFSIQSIDEHKLYQCDNVYKLSAIYEWILKVYFEWFNECVFTKIDLFQIVQLLLEFQMPTNFDQDTIDSNVDNIMASFISQKAVRFDIINDEEVAVVVGGLDITGVFTELLPCYSFIDNTYGSTNSLICYSNVCTHGQSSGFRKEIKLSEIINKSVGLWTEYWHLTPDDLAEINPREVQRQSFIFDLIILEERSLNMATAAVEIYGKRFDKSLLPDEPEFKALAFDIFEPLIQLHTEFLLTPIFWKLKTRGKFIDGVGKIYSKWCGEAKNIYLNYAKAMATVHEIIMWEKKNKTKFVTWLKEIDNSVEITRSKMYHDVIFFGGFFKSLQNMPVTLRSILKNTDPSMEDYEYLKIVIKEVEKLNFEVNQVHGLAIDHRKLVRFSKQLVLSTNSSNATSYVNVGGSTNANDDDAIQDKLALGLTYPERKLVLSGTVYKKRDLWLDPTPVYIALLDNCLLITEEISKGETQKYKLIERPIPIDYLSLEKRKIPGTSKQPLRNYSQKEHKSPMHNFSTPINSMRPLLKSSGNHMSTAYGDRKTSNTEISNANPNTDEFSFKIRNTATGESFKFFTESAEVLNQWIDAIMESFKRNAENHDLNAFEFTVLSSEFAYFDKDAPVNLPVAPEGSEIDVALKAYAQKANKDSCSWSKTTRILCCEDVKFEGRIYLFVATTDGIYVKYRDDYGSGFVKILELNDVKRMEANVKLGLLFVLDNRKLCYFNISTVVSRYLAQGNTLDENCIVGTVIRDKVRFFKIADDFGNSKHLFFERKGKIVILTPEFDQLTNQVKYFKFYKEYKLPSSSNNILNNEIEDIAIFRKSFAVCTKKTVILYQDSFEDNGIVLPSFLNDKDMMAHLRHPHLNSLPFKSATDSKKRPSIESLTEEAKKDIATCKAIPVNFFQISQSSFFALVYDEAVVKINCYGEMSDWRKDILLLDFCCTGASFHGNHLILVGDNLIQIYDLKNVEQNLGELVPVQIIKGKKIKLASSERREKTILVLSHPNILNRQLLVACNPVAMADHQ.

The segment covering 1–10 (MYRYNRSSPF) has biased composition (polar residues). 3 disordered regions span residues 1 to 144 (MYRY…FIGN), 164 to 194 (PFANGFSPNSPKSPRDSSKQQAHFSDESDLR), and 219 to 239 (EDSEFFTKPPPPLSTSRNVSG). The segment covering 12-29 (RTPEKRVSRQESQRKSIE) has biased composition (basic and acidic residues). A compositionally biased stretch (polar residues) spans 37–79 (NTRNSFLDDSDNGTDNISIGWTPISDTQQFQSPVPQAFTFTSK). Residues 87–97 (TSSSESTPKST) are compositionally biased toward low complexity. The span at 176–194 (SPRDSSKQQAHFSDESDLR) shows a compositional bias: basic and acidic residues. The DH domain maps to 467-657 (QRQSFIFDLI…EKLNFEVNQV (191 aa)). The region spanning 715–877 (KLVLSGTVYK…WIDAIMESFK (163 aa)) is the PH domain. Residues 780–802 (TSKQPLRNYSQKEHKSPMHNFST) form a disordered region. A CNH domain is found at 938-1279 (TTRILCCEDV…KLASSERREK (342 aa)).

As to quaternary structure, interacts with RHO1.

Guanine nucleotide-exchange factor (GEF) for RHO1 that stimulates the exchange of RHO1 GDP-bound form into GTP-bound form. Required for signaling of cell wall defects to RHO1. The protein is Rho1 guanine nucleotide exchange factor TUS1 (TUS1) of Saccharomyces cerevisiae (strain ATCC 204508 / S288c) (Baker's yeast).